We begin with the raw amino-acid sequence, 184 residues long: dCTP deaminase (184 aa).

Position 107–112 (107–112 (KSTYAR)) interacts with dCTP. E133 functions as the Proton donor/acceptor in the catalytic mechanism. 3 residues coordinate dCTP: Q152, Y166, and Q176.

Belongs to the dCTP deaminase family. Homotrimer.

It carries out the reaction dCTP + H2O + H(+) = dUTP + NH4(+). It functions in the pathway pyrimidine metabolism; dUMP biosynthesis; dUMP from dCTP (dUTP route): step 1/2. Its function is as follows. Catalyzes the deamination of dCTP to dUTP. The protein is dCTP deaminase of Granulibacter bethesdensis (strain ATCC BAA-1260 / CGDNIH1).